Consider the following 161-residue polypeptide: Protein-export protein SecB (161 aa).

This sequence belongs to the SecB family. As to quaternary structure, homotetramer, a dimer of dimers. One homotetramer interacts with 1 SecA dimer.

Its subcellular location is the cytoplasm. In terms of biological role, one of the proteins required for the normal export of preproteins out of the cell cytoplasm. It is a molecular chaperone that binds to a subset of precursor proteins, maintaining them in a translocation-competent state. It also specifically binds to its receptor SecA. The sequence is that of Protein-export protein SecB from Methylocella silvestris (strain DSM 15510 / CIP 108128 / LMG 27833 / NCIMB 13906 / BL2).